A 288-amino-acid chain; its full sequence is Homoserine kinase (288 aa).

79–89 (PPARGLGSSSA) provides a ligand contact to ATP.

This sequence belongs to the GHMP kinase family. Homoserine kinase subfamily.

It localises to the cytoplasm. It catalyses the reaction L-homoserine + ATP = O-phospho-L-homoserine + ADP + H(+). It participates in amino-acid biosynthesis; L-threonine biosynthesis; L-threonine from L-aspartate: step 4/5. Functionally, catalyzes the ATP-dependent phosphorylation of L-homoserine to L-homoserine phosphate. The polypeptide is Homoserine kinase (Listeria monocytogenes serotype 4a (strain HCC23)).